The following is a 221-amino-acid chain: FMN-dependent NADH:quinone oxidoreductase 1 (221 aa).

FMN is bound by residues 17–19 (SAS) and 148–151 (SSGG).

The protein belongs to the azoreductase type 1 family. As to quaternary structure, homodimer. FMN is required as a cofactor.

It carries out the reaction 2 a quinone + NADH + H(+) = 2 a 1,4-benzosemiquinone + NAD(+). The catalysed reaction is N,N-dimethyl-1,4-phenylenediamine + anthranilate + 2 NAD(+) = 2-(4-dimethylaminophenyl)diazenylbenzoate + 2 NADH + 2 H(+). Its function is as follows. Quinone reductase that provides resistance to thiol-specific stress caused by electrophilic quinones. Also exhibits azoreductase activity. Catalyzes the reductive cleavage of the azo bond in aromatic azo compounds to the corresponding amines. The polypeptide is FMN-dependent NADH:quinone oxidoreductase 1 (Clostridium acetobutylicum (strain ATCC 824 / DSM 792 / JCM 1419 / IAM 19013 / LMG 5710 / NBRC 13948 / NRRL B-527 / VKM B-1787 / 2291 / W)).